Reading from the N-terminus, the 271-residue chain is MANFTAADVKRLRELTGAGMLACKNALAETDGDFDKAVEALRIKGAKDVGKRAERATAEGLVAAKDGALIELNCETDFVAKNAEFQTLADQVVAAAAAAKPADVDALKGASIGDKTVEQAIAELSAKIGEKLELRRVAIFDGTVEAYLHRRSADLPPAVGVLVEYRGDDAAAAHAVALQIAALRARYLSRDDVPEDIVASERRIAEETARAEGKPEQALPKIVEGRLNGFFKDAVLLEQASVSDNKKTVKALLDVAGVTVTRFVRFEVGQA.

Residues Thr76–Val79 form an involved in Mg(2+) ion dislocation from EF-Tu region.

It belongs to the EF-Ts family.

It is found in the cytoplasm. In terms of biological role, associates with the EF-Tu.GDP complex and induces the exchange of GDP to GTP. It remains bound to the aminoacyl-tRNA.EF-Tu.GTP complex up to the GTP hydrolysis stage on the ribosome. The sequence is that of Elongation factor Ts from Mycobacterium tuberculosis (strain ATCC 25177 / H37Ra).